Consider the following 751-residue polypeptide: MADKRKLQGEIDRCLKKVSEGVEQFEDIWQKLHNAANANQKEKYEADLKKEIKKLQRLRDQIKTWVASNEIKDKRQLIENRKLIETQMERFKVVERETKTKAYSKEGLGLAQKVDPAQKEKEEVGQWLTNTIDTLNMQVDQFESEVESLSVQTRKKKGDKDKQDRIEGLKRHIEKHRYHVRMLETILRMLDNDSILVDAIRKIKDDVEYYVDSSQDPDFEENEFLYDDLDLEDIPQALVATSPPSHSHMEDEIFNQSSSTPTSTTSSSPIPPSPANCTTENSEDDKKRGRSTDSEVSQSPAKNGSKPVHSNQHPQSPAVPPTYPSGPPPTTSALSSTPGNNGASTPAAPTSALGPKASPAPSHNSGTPAPYAQAVAPPNASGPSNAQPRPPSAQPSGGSGGGSGGSSSNSNSGTGGGAGKQNGATSYSSVVADSPAEVTLSSSGGSSASSQALGPTSGPHNPAPSTSKESSTAAPSGAGNVASGSGNNSGGPSLLVPLPVNPPSSPTPSFSEAKAAGTLLNGPPQFSTTPEIKAPEPLSSLKSMAERAAISSGIEDPVPTLHLTDRDIILSSTSAPPTSSQPPLQLSEVNIPLSLGVCPLGPVSLTKEQLYQQAMEEAAWHHMPHPSDSERIRQYLPRNPCPTPPYHHQMPPPHSDTVEFYQRLSTETLFFIFYYLEGTKAQYLAAKALKKQSWRFHTKYMMWFQRHEEPKTITDEFEQGTYIYFDYEKWGQRKKEGFTFEYRYLEDRDLQ.

Positions 240–534 (ATSPPSHSHM…QFSTTPEIKA (295 aa)) are disordered. The span at 257–268 (SSSTPTSTTSSS) shows a compositional bias: low complexity. A compositionally biased stretch (basic and acidic residues) spans 284–293 (DDKKRGRSTD). A Phosphothreonine modification is found at threonine 292. Positions 294-315 (SEVSQSPAKNGSKPVHSNQHPQ) are enriched in polar residues. Serine 299 is modified (phosphoserine). The segment covering 317-330 (PAVPPTYPSGPPPT) has biased composition (pro residues). Polar residues predominate over residues 339–348 (GNNGASTPAA). Residues 441-450 (SSSGGSSASS) are compositionally biased toward low complexity. Polar residues predominate over residues 463-472 (APSTSKESST). The span at 473–498 (AAPSGAGNVASGSGNNSGGPSLLVPL) shows a compositional bias: low complexity. Serine 540 carries the phosphoserine modification. The segment at 659-751 (EFYQRLSTET…YRYLEDRDLQ (93 aa)) is repressor domain.

This sequence belongs to the CNOT2/3/5 family. As to quaternary structure, component of the CCR4-NOT complex; distinct complexes seem to exist that differ in the participation of probably mutually exclusive catalytic subunits. In the complex interacts directly with CNOT2. Interacts with TIP120B and NANOS2. Interacts with EBF1. Interacts in an RNA-independent manner with BICC1 (via KH domains).

Its subcellular location is the nucleus. It localises to the cytoplasm. The protein resides in the P-body. Functionally, component of the CCR4-NOT complex which is one of the major cellular mRNA deadenylases and is linked to various cellular processes including bulk mRNA degradation, miRNA-mediated repression, translational repression during translational initiation and general transcription regulation. Additional complex functions may be a consequence of its influence on mRNA expression. May be involved in metabolic regulation; may be involved in recruitment of the CCR4-NOT complex to deadenylation target mRNAs involved in energy metabolism. Involved in mitotic progression and regulation of the spindle assembly checkpoint by regulating the stability of MAD1L1 mRNA. Can repress transcription and may link the CCR4-NOT complex to transcriptional regulation; the repressive function may involve histone deacetylases. Involved in the maintenance of embryonic stem (ES) cell identity; prevents their differentiation towards extraembryonic trophectoderm lineages. The protein is CCR4-NOT transcription complex subunit 3 (Cnot3) of Mus musculus (Mouse).